The sequence spans 156 residues: Putative pre-16S rRNA nuclease (156 aa).

Belongs to the YqgF nuclease family.

The protein resides in the cytoplasm. Functionally, could be a nuclease involved in processing of the 5'-end of pre-16S rRNA. The chain is Putative pre-16S rRNA nuclease from Phenylobacterium zucineum (strain HLK1).